The primary structure comprises 1150 residues: BAI1-associated protein 3 (1150 aa).

The tract at residues 22–44 is disordered; that stretch reads RRKTEQEPEVTNSQEPPTGAWKP. Residues 139–298 form the C2 1 domain; it reads SSEEHMEAIM…VKSARANGTA (160 aa). Residues aspartate 174 and aspartate 180 each coordinate Ca(2+). The interval 193–214 is disordered; sequence APQEPSGQKEQRFGFRKGSKRS. Positions 258 and 260 each coordinate Ca(2+). An MHD1 domain is found at 626 to 747; that stretch reads FELYLTLADT…EASLFYTELL (122 aa). The region spanning 851–959 is the MHD2 domain; it reads DEAVAPLLKY…CSTRECIEQF (109 aa). Residues 973–1099 enclose the C2 2 domain; it reads RFGRLTVRCH…GIARPHVGGG (127 aa). Ca(2+) contacts are provided by leucine 1003, aspartate 1004, aspartate 1010, aspartate 1068, aspartate 1070, serine 1073, and aspartate 1076.

This sequence belongs to the unc-13 family. As to quaternary structure, interacts with ADGRB1, this interaction is direct. Interacts with endosomal SNARE proteins VAMP3, VAMP4, STX6 and STX16; this interaction is increased in the presence of calcium. It depends on Ca(2+) as a cofactor. In terms of tissue distribution, prominently expressed in brain structures including hypothalamus, amygdala, stria terminalis and periaqueductal gray (at protein level). Expressed in nonneuronal tissues, including placenta, lung, pancreas, spleen, and testes. Within placenta, expression is restricted to the syncytiotrophoblasts.

Its subcellular location is the cytoplasm. The protein resides in the cytosol. The protein localises to the recycling endosome membrane. It localises to the late endosome membrane. It is found in the golgi apparatus. Its subcellular location is the trans-Golgi network membrane. The protein resides in the cell membrane. Its function is as follows. Functions in endosome to Golgi retrograde transport. In response to calcium influx, may interact with SNARE fusion receptors and membrane phospholipids to mediate endosome fusion with the trans-Golgi network. By promoting the recycling of secretory vesicle transmembrane proteins, it indirectly controls dense-core secretory vesicle biogenesis, maturation and their ability to mediate the constitutive and regulated secretion of neurotransmitters and hormones. May regulate behavior and food intake by controlling calcium-stimulated exocytosis of neurotransmitters including NPY and serotonin and hormones like insulin. Proposed to play a role in hypothalamic neuronal firing by modulating gamma-aminobutyric acid (GABA)ergic inhibitory neurotransmission. This Mus musculus (Mouse) protein is BAI1-associated protein 3.